The chain runs to 154 residues: Large ribosomal subunit protein uL15 (154 aa).

The interval 1–57 is disordered; it reads MRFQDLHPQAGSRRRKRRIGRGIAAGQGASGGFGMRGQKSRSGRPTRPGFEGGQNPL. The segment covering 23–35 has biased composition (gly residues); that stretch reads IAAGQGASGGFGM.

This sequence belongs to the universal ribosomal protein uL15 family. Part of the 50S ribosomal subunit.

Binds to the 23S rRNA. The protein is Large ribosomal subunit protein uL15 of Thermosynechococcus vestitus (strain NIES-2133 / IAM M-273 / BP-1).